A 393-amino-acid polypeptide reads, in one-letter code: MSSALANIYARLPVSFTHGRGVWLWDTGERRYLDALAGIGVSCLGHGHPGLVAAISEQAARLIHTSNIYEVPQQAALARRLAELSGMSEVLFNNSGSEANEAAIKLARYYGYKQGNTHAHIITMDSSWHGRTLATLAATGSDKARQGFGPMPSGFIQVPYNDLPAIRAAGEAEPRVTAVLLEVLQGEGGIRPSDMAFLQGVRQLCTERGWLLMIDEVQSGIGRTGKWFAHQWADIRPDVMTLAKGLAGGVPIGAMLAAGPAAGVFAPGSHGTTFGGGPLACAAGLAVIDAIEQEGLLGNAHEVGAHLHAALASELAGAPGVIEVRGRGLMLGIELDRPCGILATRAMEAGLLINVTRERVVRLLPPLILSGEEADQIVRILVPLIKQFLAQQQ.

Position 131 (R131) interacts with N(2)-acetyl-L-ornithine. 215–218 (DEVQ) contributes to the pyridoxal 5'-phosphate binding site. Residue K244 is modified to N6-(pyridoxal phosphate)lysine. T272 contributes to the N(2)-acetyl-L-ornithine binding site. T273 is a pyridoxal 5'-phosphate binding site.

This sequence belongs to the class-III pyridoxal-phosphate-dependent aminotransferase family. ArgD subfamily. As to quaternary structure, homodimer. Pyridoxal 5'-phosphate is required as a cofactor.

The protein resides in the cytoplasm. The enzyme catalyses N(2)-acetyl-L-ornithine + 2-oxoglutarate = N-acetyl-L-glutamate 5-semialdehyde + L-glutamate. It participates in amino-acid biosynthesis; L-arginine biosynthesis; N(2)-acetyl-L-ornithine from L-glutamate: step 4/4. The protein is Acetylornithine aminotransferase 1 of Bordetella pertussis (strain Tohama I / ATCC BAA-589 / NCTC 13251).